The chain runs to 132 residues: Small ribosomal subunit protein uS8 (132 aa).

The protein belongs to the universal ribosomal protein uS8 family. As to quaternary structure, part of the 30S ribosomal subunit. Contacts proteins S5 and S12.

In terms of biological role, one of the primary rRNA binding proteins, it binds directly to 16S rRNA central domain where it helps coordinate assembly of the platform of the 30S subunit. The sequence is that of Small ribosomal subunit protein uS8 from Parvibaculum lavamentivorans (strain DS-1 / DSM 13023 / NCIMB 13966).